We begin with the raw amino-acid sequence, 161 residues long: Phosphopantetheine adenylyltransferase (161 aa).

Position 11 (threonine 11) interacts with substrate. ATP contacts are provided by residues 11–12 (TF) and histidine 19. Residues lysine 43, threonine 75, and arginine 89 each contribute to the substrate site. Residues 90-92 (GLR), glutamate 100, and 125-131 (YSFLSSS) each bind ATP.

It belongs to the bacterial CoaD family. Homohexamer. Mg(2+) is required as a cofactor.

The protein resides in the cytoplasm. The enzyme catalyses (R)-4'-phosphopantetheine + ATP + H(+) = 3'-dephospho-CoA + diphosphate. It functions in the pathway cofactor biosynthesis; coenzyme A biosynthesis; CoA from (R)-pantothenate: step 4/5. Functionally, reversibly transfers an adenylyl group from ATP to 4'-phosphopantetheine, yielding dephospho-CoA (dPCoA) and pyrophosphate. This chain is Phosphopantetheine adenylyltransferase, found in Listeria innocua serovar 6a (strain ATCC BAA-680 / CLIP 11262).